The primary structure comprises 130 residues: DNA-directed RNA polymerase subunit omega (130 aa).

The segment at 109-130 (EEELLKGLEGLAPPEEQPEEDE) is disordered.

Belongs to the RNA polymerase subunit omega family. The RNAP catalytic core consists of 2 alpha, 1 beta, 1 beta' and 1 omega subunit. When a sigma factor is associated with the core the holoenzyme is formed, which can initiate transcription.

It catalyses the reaction RNA(n) + a ribonucleoside 5'-triphosphate = RNA(n+1) + diphosphate. Promotes RNA polymerase assembly. Latches the N- and C-terminal regions of the beta' subunit thereby facilitating its interaction with the beta and alpha subunits. The polypeptide is DNA-directed RNA polymerase subunit omega (Rhodopseudomonas palustris (strain BisA53)).